Here is a 1883-residue protein sequence, read N- to C-terminus: Zinc finger protein 106 (1883 aa).

Glycyl lysine isopeptide (Lys-Gly) (interchain with G-Cter in SUMO2) cross-links involve residues Ile6 and Lys37. Residues His20 to His44 form a C2H2-type 1; atypical zinc finger. Positions Ile39–Gly162 are disordered. Residues Glu52 to Phe67 are compositionally biased toward acidic residues. Glycyl lysine isopeptide (Lys-Gly) (interchain with G-Cter in SUMO2) cross-links involve residues Lys69 and Lys76. Basic and acidic residues-rich tracts occupy residues Gln77–Glu86, Ser96–Ser116, and Pro128–Gly138. Residue Lys133 forms a Glycyl lysine isopeptide (Lys-Gly) (interchain with G-Cter in SUMO2) linkage. Polar residues predominate over residues Phe139–Pro148. Residues Lys243, Lys287, and Lys305 each participate in a glycyl lysine isopeptide (Lys-Gly) (interchain with G-Cter in SUMO2) cross-link. Residues Gln322–Asn338 show a composition bias toward polar residues. The interval Gln322–Lys356 is disordered. Glycyl lysine isopeptide (Lys-Gly) (interchain with G-Cter in SUMO2) cross-links involve residues Lys356, Lys365, Lys371, and Lys417. Residues Ile389–Ala423 form a disordered region. The segment covering Gly412–Ala423 has biased composition (polar residues). Ser422 bears the Phosphoserine mark. Residues Lys451, Lys461, Lys477, Lys492, Lys505, Lys515, Lys525, Lys539, and Lys557 each participate in a glycyl lysine isopeptide (Lys-Gly) (interchain with G-Cter in SUMO2) cross-link. The interval Cys457–Pro501 is disordered. A compositionally biased stretch (polar residues) spans Lys461 to Pro493. The interval Leu586–Glu637 is disordered. The residue at position 590 (Ser590) is a Phosphoserine. A Glycyl lysine isopeptide (Lys-Gly) (interchain with G-Cter in SUMO2) cross-link involves residue Lys603. Positions Gly608–Arg620 are enriched in polar residues. Phosphoserine occurs at positions 641 and 661. Glycyl lysine isopeptide (Lys-Gly) (interchain with G-Cter in SUMO2) cross-links involve residues Lys671, Lys684, Lys705, Lys721, Lys741, Lys775, and Lys807. Phosphoserine occurs at positions 859, 861, 864, and 893. Residues Glu879–Ile945 form a disordered region. Residues Pro888–Ala906 are compositionally biased toward polar residues. Glycyl lysine isopeptide (Lys-Gly) (interchain with G-Cter in SUMO2) cross-links involve residues Lys905 and Lys911. Ser937 carries the post-translational modification Phosphoserine. Lys953 participates in a covalent cross-link: Glycyl lysine isopeptide (Lys-Gly) (interchain with G-Cter in SUMO2). Positions Gln958 to Glu976 are enriched in polar residues. Disordered stretches follow at residues Gln958–Ser982, Ala997–Ser1048, Glu1121–Ser1140, and Pro1182–Ser1218. Thr1021 carries the post-translational modification Phosphothreonine. Phosphoserine is present on residues Ser1025, Ser1026, and Ser1031. Residues Lys1035 to Lys1045 show a composition bias toward basic residues. Ser1249 carries the phosphoserine modification. The tract at residues Glu1252–Thr1483 is disordered. Positions Glu1255–Glu1277 are enriched in basic and acidic residues. Lys1265 is covalently cross-linked (Glycyl lysine isopeptide (Lys-Gly) (interchain with G-Cter in SUMO2)). Polar residues-rich tracts occupy residues Asn1278 to Asn1291 and Lys1299 to Leu1312. Phosphoserine occurs at positions 1279, 1281, and 1284. Residue Lys1299 forms a Glycyl lysine isopeptide (Lys-Gly) (interchain with G-Cter in SUMO2) linkage. Ser1302 is modified (phosphoserine). Residue Lys1324 forms a Glycyl lysine isopeptide (Lys-Gly) (interchain with G-Cter in SUMO2) linkage. Ser1328 carries the phosphoserine modification. Over residues Pro1333 to Thr1346 the composition is skewed to polar residues. A compositionally biased stretch (basic residues) spans Ser1349–Arg1362. The residue at position 1370 (Ser1370) is a Phosphoserine. A Phosphothreonine modification is found at Thr1372. Glycyl lysine isopeptide (Lys-Gly) (interchain with G-Cter in SUMO2) cross-links involve residues Lys1380, Lys1392, and Lys1395. 2 stretches are compositionally biased toward basic and acidic residues: residues Glu1402–Glu1416 and Gly1444–Ile1456. Lys1454 is covalently cross-linked (Glycyl lysine isopeptide (Lys-Gly) (interchain with G-Cter in SUMO2)). Residues Trp1457 to Ile1481 are compositionally biased toward polar residues. The residue at position 1468 (Ser1468) is a Phosphoserine. Glycyl lysine isopeptide (Lys-Gly) (interchain with G-Cter in SUMO2) cross-links involve residues Lys1486 and Lys1504. The segment covering Ser1502 to Ser1513 has biased composition (polar residues). The tract at residues Ser1502 to Phe1527 is disordered. WD repeat units lie at residues Gly1529–Glu1568, His1570–Gln1611, His1654–Thr1695, Gly1698–Lys1737, Gly1738–Val1775, and Gly1778–Cys1815. Residue Lys1585 forms a Glycyl lysine isopeptide (Lys-Gly) (interchain with G-Cter in SUMO2) linkage. A Glycyl lysine isopeptide (Lys-Gly) (interchain with G-Cter in SUMO2) cross-link involves residue Lys1737. The C2H2-type 2; atypical zinc-finger motif lies at Tyr1813–His1838. Residue Lys1864 forms a Glycyl lysine isopeptide (Lys-Gly) (interchain with G-Cter in SUMO2) linkage.

As to quaternary structure, interacts with KNOP1. Interacts with TARDBP and NUP107. Interacts (via N-terminus) with RBM39. Interacts with the SH3 domains of FYN and GRB2. Phosphorylated by FYN in vitro.

Its subcellular location is the nucleus. The protein localises to the nucleolus. The protein resides in the nucleus speckle. Its function is as follows. RNA-binding protein. Specifically binds to 5'-GGGGCC-3' sequence repeats in RNA. Essential for maintenance of peripheral motor neuron and skeletal muscle function. Required for normal expression and/or alternative splicing of a number of genes in spinal cord and skeletal muscle, including the neurite outgrowth inhibitor RTN4. Also contributes to normal mitochondrial respiratory function in motor neurons, via an unknown mechanism. This chain is Zinc finger protein 106 (ZNF106), found in Homo sapiens (Human).